A 218-amino-acid polypeptide reads, in one-letter code: Small ribosomal subunit protein uS3c (218 aa).

Residues isoleucine 43–glycine 118 enclose the KH type-2 domain.

The protein belongs to the universal ribosomal protein uS3 family. In terms of assembly, part of the 30S ribosomal subunit.

It is found in the plastid. It localises to the chloroplast. The sequence is that of Small ribosomal subunit protein uS3c (rps3) from Gossypium barbadense (Sea Island cotton).